The sequence spans 311 residues: 4-hydroxy-3-methylbut-2-enyl diphosphate reductase (311 aa).

C12 is a [4Fe-4S] cluster binding site. (2E)-4-hydroxy-3-methylbut-2-enyl diphosphate contacts are provided by H41 and H74. Positions 41 and 74 each coordinate dimethylallyl diphosphate. Positions 41 and 74 each coordinate isopentenyl diphosphate. A [4Fe-4S] cluster-binding site is contributed by C96. Residue H124 participates in (2E)-4-hydroxy-3-methylbut-2-enyl diphosphate binding. H124 is a dimethylallyl diphosphate binding site. H124 contacts isopentenyl diphosphate. E126 serves as the catalytic Proton donor. Residue T168 participates in (2E)-4-hydroxy-3-methylbut-2-enyl diphosphate binding. Residue C198 participates in [4Fe-4S] cluster binding. Positions 226, 227, 228, and 270 each coordinate (2E)-4-hydroxy-3-methylbut-2-enyl diphosphate. Dimethylallyl diphosphate is bound by residues S226, S227, N228, and S270. S226, S227, N228, and S270 together coordinate isopentenyl diphosphate.

The protein belongs to the IspH family. The cofactor is [4Fe-4S] cluster.

The catalysed reaction is isopentenyl diphosphate + 2 oxidized [2Fe-2S]-[ferredoxin] + H2O = (2E)-4-hydroxy-3-methylbut-2-enyl diphosphate + 2 reduced [2Fe-2S]-[ferredoxin] + 2 H(+). The enzyme catalyses dimethylallyl diphosphate + 2 oxidized [2Fe-2S]-[ferredoxin] + H2O = (2E)-4-hydroxy-3-methylbut-2-enyl diphosphate + 2 reduced [2Fe-2S]-[ferredoxin] + 2 H(+). Its pathway is isoprenoid biosynthesis; dimethylallyl diphosphate biosynthesis; dimethylallyl diphosphate from (2E)-4-hydroxy-3-methylbutenyl diphosphate: step 1/1. The protein operates within isoprenoid biosynthesis; isopentenyl diphosphate biosynthesis via DXP pathway; isopentenyl diphosphate from 1-deoxy-D-xylulose 5-phosphate: step 6/6. Catalyzes the conversion of 1-hydroxy-2-methyl-2-(E)-butenyl 4-diphosphate (HMBPP) into a mixture of isopentenyl diphosphate (IPP) and dimethylallyl diphosphate (DMAPP). Acts in the terminal step of the DOXP/MEP pathway for isoprenoid precursor biosynthesis. This Alcanivorax borkumensis (strain ATCC 700651 / DSM 11573 / NCIMB 13689 / SK2) protein is 4-hydroxy-3-methylbut-2-enyl diphosphate reductase.